The sequence spans 529 residues: Autophagy-related protein 21 (529 aa).

Over residues Asn49–His62 the composition is skewed to polar residues. The segment at Asn49 to Thr70 is disordered. WD repeat units lie at residues Ala271–Lys311 and Gly321–Cys361. A L/FRRG motif motif is present at residues Leu318–His322. Positions Thr362 to Glu388 are disordered. Basic and acidic residues predominate over residues Ser366–Asp375.

It belongs to the WD repeat PROPPIN family.

The protein localises to the cytoplasm. The protein resides in the membrane. It localises to the vacuole membrane. Required for cytoplasm to vacuole transport (Cvt) vesicles formation and mitophagy. Involved in binding of phosphatidylethanolamine to ATG8 and in recruitment of ATG8 and ATG5 to the pre-autophagosomal structure. Protects ATG8 from ARG4-mediated cleavage. The polypeptide is Autophagy-related protein 21 (ATG21) (Candida albicans (strain SC5314 / ATCC MYA-2876) (Yeast)).